We begin with the raw amino-acid sequence, 92 residues long: Putative transition state regulator Abh (92 aa).

The region spanning 5–50 is the SpoVT-AbrB domain; it reads GVVRKVDELGRIVMPIELRRALDIAIKDSIEFFVDGDKIILKKYKP.

The protein to B.subtilis AbrB and SpoVT.

The polypeptide is Putative transition state regulator Abh (abh) (Bacillus subtilis (strain 168)).